The sequence spans 1404 residues: DNA-directed RNA polymerase subunit beta' (1404 aa).

Residues C60, C62, C75, and C78 each coordinate Zn(2+). The Mg(2+) site is built by D449, D451, and D453. Residues C778, C852, C859, and C862 each coordinate Zn(2+). The interval 1381–1404 (DRPLEEEEEEEIPQSIADDSDGDE) is disordered. Residues 1384–1404 (LEEEEEEEIPQSIADDSDGDE) are compositionally biased toward acidic residues.

This sequence belongs to the RNA polymerase beta' chain family. As to quaternary structure, the RNAP catalytic core consists of 2 alpha, 1 beta, 1 beta' and 1 omega subunit. When a sigma factor is associated with the core the holoenzyme is formed, which can initiate transcription. The cofactor is Mg(2+). It depends on Zn(2+) as a cofactor.

It catalyses the reaction RNA(n) + a ribonucleoside 5'-triphosphate = RNA(n+1) + diphosphate. Functionally, DNA-dependent RNA polymerase catalyzes the transcription of DNA into RNA using the four ribonucleoside triphosphates as substrates. This is DNA-directed RNA polymerase subunit beta' from Leptospira borgpetersenii serovar Hardjo-bovis (strain JB197).